Consider the following 80-residue polypeptide: Exodeoxyribonuclease 7 small subunit (80 aa).

The protein belongs to the XseB family. In terms of assembly, heterooligomer composed of large and small subunits.

The protein resides in the cytoplasm. The catalysed reaction is Exonucleolytic cleavage in either 5'- to 3'- or 3'- to 5'-direction to yield nucleoside 5'-phosphates.. Its function is as follows. Bidirectionally degrades single-stranded DNA into large acid-insoluble oligonucleotides, which are then degraded further into small acid-soluble oligonucleotides. The polypeptide is Exodeoxyribonuclease 7 small subunit (Pseudomonas putida (strain GB-1)).